Consider the following 126-residue polypeptide: Small ribosomal subunit protein uS12 (126 aa).

The segment at 1–28 (MPTINQLVRKGRQSETTKSKSPALQDCP) is disordered. Asp89 bears the 3-methylthioaspartic acid mark. The disordered stretch occupies residues 103-126 (DTQGVKDRKQARSKYGAKRAKAAK). Residues 113–126 (ARSKYGAKRAKAAK) show a composition bias toward basic residues.

The protein belongs to the universal ribosomal protein uS12 family. In terms of assembly, part of the 30S ribosomal subunit. Contacts proteins S8 and S17. May interact with IF1 in the 30S initiation complex.

Functionally, with S4 and S5 plays an important role in translational accuracy. In terms of biological role, interacts with and stabilizes bases of the 16S rRNA that are involved in tRNA selection in the A site and with the mRNA backbone. Located at the interface of the 30S and 50S subunits, it traverses the body of the 30S subunit contacting proteins on the other side and probably holding the rRNA structure together. The combined cluster of proteins S8, S12 and S17 appears to hold together the shoulder and platform of the 30S subunit. The sequence is that of Small ribosomal subunit protein uS12 from Burkholderia orbicola (strain MC0-3).